We begin with the raw amino-acid sequence, 90 residues long: MDPLKAQQLAAELEVEMMADMYNRMTGACHKKCVPPHYKEAELSKGESVCLDRCVSKYLDIHERMGKKLTELSLQDEELMKKMQQGVTST.

Residues 29-54 (CHKKCVPPHYKEAELSKGESVCLDRC) carry the Twin CX3C motif motif. Intrachain disulfides connect Cys-29–Cys-54 and Cys-33–Cys-50.

It belongs to the small Tim family. In terms of assembly, heterohexamer; composed of 3 copies of TIMM9 and 3 copies of TIMM10/TIM10A, named soluble 70 kDa complex. The complex forms a 6-bladed alpha-propeller structure and associates with the TIMM22 component of the TIM22 complex. Interacts with multi-pass transmembrane proteins in transit.

It is found in the mitochondrion inner membrane. Its function is as follows. Mitochondrial intermembrane chaperone that participates in the import and insertion of multi-pass transmembrane proteins into the mitochondrial inner membrane. May also be required for the transfer of beta-barrel precursors from the TOM complex to the sorting and assembly machinery (SAM complex) of the outer membrane. Acts as a chaperone-like protein that protects the hydrophobic precursors from aggregation and guide them through the mitochondrial intermembrane space. This is Mitochondrial import inner membrane translocase subunit Tim10-B (timm10-b) from Xenopus laevis (African clawed frog).